Reading from the N-terminus, the 216-residue chain is Large ribosomal subunit protein uL1A (216 aa).

2 positions are modified to phosphoserine: Ser-85 and Ser-128.

Belongs to the universal ribosomal protein uL1 family. Component of the large ribosomal subunit (LSU). Mature yeast ribosomes consist of a small (40S) and a large (60S) subunit. The 40S small subunit contains 1 molecule of ribosomal RNA (18S rRNA) and at least 33 different proteins. The large 60S subunit contains 3 rRNA molecules (25S, 5.8S and 5S rRNA) and at least 46 different proteins. uL1 forms part of the L1 stalk.

The protein resides in the cytoplasm. Functionally, component of the ribosome, a large ribonucleoprotein complex responsible for the synthesis of proteins in the cell. The small ribosomal subunit (SSU) binds messenger RNAs (mRNAs) and translates the encoded message by selecting cognate aminoacyl-transfer RNA (tRNA) molecules. The large subunit (LSU) contains the ribosomal catalytic site termed the peptidyl transferase center (PTC), which catalyzes the formation of peptide bonds, thereby polymerizing the amino acids delivered by tRNAs into a polypeptide chain. The nascent polypeptides leave the ribosome through a tunnel in the LSU and interact with protein factors that function in enzymatic processing, targeting, and the membrane insertion of nascent chains at the exit of the ribosomal tunnel. uL1 forms part of the L1 stalk, a mobile element that plays a role in evacuating the exit-site tRNA. In Schizosaccharomyces pombe (strain 972 / ATCC 24843) (Fission yeast), this protein is Large ribosomal subunit protein uL1A (rpl102).